Consider the following 191-residue polypeptide: Hypoxanthine/guanine phosphoribosyltransferase (191 aa).

Belongs to the purine/pyrimidine phosphoribosyltransferase family. Archaeal HPRT subfamily. In terms of assembly, homodimer.

The protein localises to the cytoplasm. It catalyses the reaction IMP + diphosphate = hypoxanthine + 5-phospho-alpha-D-ribose 1-diphosphate. It carries out the reaction GMP + diphosphate = guanine + 5-phospho-alpha-D-ribose 1-diphosphate. Its pathway is purine metabolism; IMP biosynthesis via salvage pathway; IMP from hypoxanthine: step 1/1. Functionally, catalyzes a salvage reaction resulting in the formation of IMP that is energically less costly than de novo synthesis. The polypeptide is Hypoxanthine/guanine phosphoribosyltransferase (Methanocella arvoryzae (strain DSM 22066 / NBRC 105507 / MRE50)).